We begin with the raw amino-acid sequence, 65 residues long: Large ribosomal subunit protein bL35 (65 aa).

Belongs to the bacterial ribosomal protein bL35 family.

This chain is Large ribosomal subunit protein bL35, found in Methylobacillus flagellatus (strain ATCC 51484 / DSM 6875 / VKM B-1610 / KT).